The chain runs to 126 residues: Fluoride-specific ion channel FluC 1 (126 aa).

The next 4 helical transmembrane spans lie at 1–21 (MAGS…GAWL), 38–58 (WGTF…LALY), 67–87 (LALL…TFAV), and 99–119 (FVSL…AGVG). Residues Gly-77 and Ser-80 each coordinate Na(+).

This sequence belongs to the fluoride channel Fluc/FEX (TC 1.A.43) family.

Its subcellular location is the cell inner membrane. It catalyses the reaction fluoride(in) = fluoride(out). With respect to regulation, na(+) is not transported, but it plays an essential structural role and its presence is essential for fluoride channel function. Functionally, fluoride-specific ion channel. Important for reducing fluoride concentration in the cell, thus reducing its toxicity. In Synechococcus sp. (strain CC9902), this protein is Fluoride-specific ion channel FluC 1.